The chain runs to 168 residues: Endoribonuclease YbeY (168 aa).

Zn(2+) contacts are provided by His-126, His-130, and His-136.

It belongs to the endoribonuclease YbeY family. The cofactor is Zn(2+).

Its subcellular location is the cytoplasm. Functionally, single strand-specific metallo-endoribonuclease involved in late-stage 70S ribosome quality control and in maturation of the 3' terminus of the 16S rRNA. This is Endoribonuclease YbeY from Agrobacterium fabrum (strain C58 / ATCC 33970) (Agrobacterium tumefaciens (strain C58)).